The primary structure comprises 406 residues: MNAHEIKKLFPVLDQEVNGSPLVYLDSAATSQKPIAVIEALDDYYRRYNSNVHRGVHTLGTLATDGYEGAREKIRRFIHASSTEEIIFTRGTTTAINLVAASYGRANLGEGDEIVITPMEHHSNIIPWQQVAKATGATLTYLPLQKDGTIKIEDVEKTISEKTKIVAIMHVSNVLGTINPVKEIAEIAHRHGAIMLVDGAQSAPHMKIDVQELGCDFFAFSGHKMAGPTGIGVLYGKKAHLEKMEPVEFGGEMIDFVGLYDSTWKELPWKFEGGTPIIAGAIGLGAAIDFLEDIGLDEIEKHEHELAQYALDRLSELEGMTVYGPQKRAGLVTFNIEDVHPHDVATVLDADGIAVRAGHHCAQPLMKWLDVTATARASFYLYNTKEDIDALAKGLEKTKEYFGHVF.

At Lys224 the chain carries N6-(pyridoxal phosphate)lysine. Cys361 functions as the Cysteine persulfide intermediate in the catalytic mechanism.

This sequence belongs to the class-V pyridoxal-phosphate-dependent aminotransferase family. Csd subfamily. The cofactor is pyridoxal 5'-phosphate.

It catalyses the reaction (sulfur carrier)-H + L-cysteine = (sulfur carrier)-SH + L-alanine. Catalyzes the removal of elemental sulfur and selenium atoms from L-cysteine, L-cystine, L-selenocysteine, and L-selenocystine to produce L-alanine. In Halalkalibacterium halodurans (strain ATCC BAA-125 / DSM 18197 / FERM 7344 / JCM 9153 / C-125) (Bacillus halodurans), this protein is Probable cysteine desulfurase (csd).